The chain runs to 426 residues: uncharacterized protein (426 aa).

This sequence belongs to the serpin family.

This is an uncharacterized protein from Methanosarcina acetivorans (strain ATCC 35395 / DSM 2834 / JCM 12185 / C2A).